Here is a 152-residue protein sequence, read N- to C-terminus: 17.1 kDa class II heat shock protein (152 aa).

A sHSP domain is found at aspartate 36 to alanine 152.

The protein belongs to the small heat shock protein (HSP20) family.

It localises to the cytoplasm. This Pisum sativum (Garden pea) protein is 17.1 kDa class II heat shock protein (HSP17.7).